Reading from the N-terminus, the 254-residue chain is MKAVILCGGKGTRMSEVTNDIPKPLAMIGGKPILWHIMKIYQYYGVNEFILLLGYKGEKIKEYFLDYEWKHNSLTLDSSTGEVQMLGQPETWKITFLETGVDTLTAGRILQAKDYIGDETFLLTYGDGLANINLFHLISYHQTKGAAATVTGIDKVSQFGTLTVEDGMAKTFSEKTSSDGIINGGFFVLSPKVFDYLPKDGNTMFEDEPLKNLAKDGELAVYRHYGFWTAIDTYKNLLEVNKMWNQGQQVWKVW.

Substrate-binding positions include 6-10 (LCGGK), 11-13 (GTR), Lys23, Thr103, Arg108, and Gly126. Mg(2+) contacts are provided by Asp127 and Asp232.

It belongs to the glucose-1-phosphate cytidylyltransferase family. Mg(2+) is required as a cofactor.

The catalysed reaction is alpha-D-glucose 1-phosphate + CTP + H(+) = CDP-D-glucose + diphosphate. Functionally, catalyzes the transfer of a CMP moiety from CTP to glucose 1-phosphate. The chain is Probable glucose-1-phosphate cytidylyltransferase (yfnH) from Bacillus subtilis (strain 168).